The following is a 117-amino-acid chain: MQTSNILAKIEAPLFREGIPDFRVGDTVRVHYRIVEGEKERIQVFQGVVLKRHRAGVRSTFTVRKVSFTVGVERMFLLHSPRIDKVEIVSRGVVRRSRLFYLRNLAGKAARVRDAKD.

Belongs to the bacterial ribosomal protein bL19 family.

Functionally, this protein is located at the 30S-50S ribosomal subunit interface and may play a role in the structure and function of the aminoacyl-tRNA binding site. The sequence is that of Large ribosomal subunit protein bL19 from Sorangium cellulosum (strain So ce56) (Polyangium cellulosum (strain So ce56)).